The following is a 353-amino-acid chain: Protein pelota homolog (353 aa).

This sequence belongs to the eukaryotic release factor 1 family. Pelota subfamily. Monomer. A divalent metal cation serves as cofactor.

The protein localises to the cytoplasm. In terms of biological role, may function in recognizing stalled ribosomes, interact with stem-loop structures in stalled mRNA molecules, and effect endonucleolytic cleavage of the mRNA. May play a role in the release non-functional ribosomes and degradation of damaged mRNAs. Has endoribonuclease activity. The protein is Protein pelota homolog of Methanobrevibacter smithii (strain ATCC 35061 / DSM 861 / OCM 144 / PS).